Consider the following 522-residue polypeptide: 2-isopropylmalate synthase (522 aa).

The 263-residue stretch at 5 to 267 (VIIFDTTLRD…ETGINAKEIH (263 aa)) folds into the Pyruvate carboxyltransferase domain. Mn(2+) is bound by residues aspartate 14, histidine 202, histidine 204, and asparagine 238. Positions 392–522 (QLQQLVVQSD…MHKNRELGGV (131 aa)) are regulatory domain.

Belongs to the alpha-IPM synthase/homocitrate synthase family. LeuA type 1 subfamily. As to quaternary structure, homodimer. The cofactor is Mn(2+).

It localises to the cytoplasm. It catalyses the reaction 3-methyl-2-oxobutanoate + acetyl-CoA + H2O = (2S)-2-isopropylmalate + CoA + H(+). It participates in amino-acid biosynthesis; L-leucine biosynthesis; L-leucine from 3-methyl-2-oxobutanoate: step 1/4. Functionally, catalyzes the condensation of the acetyl group of acetyl-CoA with 3-methyl-2-oxobutanoate (2-ketoisovalerate) to form 3-carboxy-3-hydroxy-4-methylpentanoate (2-isopropylmalate). The chain is 2-isopropylmalate synthase from Shewanella sp. (strain ANA-3).